The primary structure comprises 230 residues: 2-C-methyl-D-erythritol 4-phosphate cytidylyltransferase (230 aa).

This sequence belongs to the IspD/TarI cytidylyltransferase family. IspD subfamily.

The catalysed reaction is 2-C-methyl-D-erythritol 4-phosphate + CTP + H(+) = 4-CDP-2-C-methyl-D-erythritol + diphosphate. It participates in isoprenoid biosynthesis; isopentenyl diphosphate biosynthesis via DXP pathway; isopentenyl diphosphate from 1-deoxy-D-xylulose 5-phosphate: step 2/6. Its function is as follows. Catalyzes the formation of 4-diphosphocytidyl-2-C-methyl-D-erythritol from CTP and 2-C-methyl-D-erythritol 4-phosphate (MEP). This Laribacter hongkongensis (strain HLHK9) protein is 2-C-methyl-D-erythritol 4-phosphate cytidylyltransferase.